Here is a 524-residue protein sequence, read N- to C-terminus: Inosine-5'-monophosphate dehydrogenase (524 aa).

CBS domains are found at residues 121 to 180 (FILD…NTPV) and 184 to 242 (MTPR…PLAS). NAD(+)-binding positions include 280–282 (DSS) and 330–332 (GMG). Residues Gly-332 and Gly-334 each coordinate K(+). Ser-335 contributes to the IMP binding site. Residue Cys-337 participates in K(+) binding. Cys-337 (thioimidate intermediate) is an active-site residue. IMP-binding positions include 370 to 372 (DGG), 393 to 394 (GG), and 417 to 421 (YRGMG). The Proton acceptor role is filled by Arg-439. An IMP-binding site is contributed by Gln-451. K(+)-binding residues include Glu-510 and Gly-511.

It belongs to the IMPDH/GMPR family. As to quaternary structure, homotetramer. The cofactor is K(+).

The protein resides in the cytoplasm. It catalyses the reaction IMP + NAD(+) + H2O = XMP + NADH + H(+). It functions in the pathway purine metabolism; XMP biosynthesis via de novo pathway; XMP from IMP: step 1/1. Its activity is regulated as follows. Mycophenolic acid (MPA) is a non-competitive inhibitor that prevents formation of the closed enzyme conformation by binding to the same site as the amobile flap. In contrast, mizoribine monophosphate (MZP) is a competitive inhibitor that induces the closed conformation. MPA is a potent inhibitor of mammalian IMPDHs but a poor inhibitor of the bacterial enzymes. MZP is a more potent inhibitor of bacterial IMPDH. Its function is as follows. Catalyzes the conversion of inosine 5'-phosphate (IMP) to xanthosine 5'-phosphate (XMP), the first committed and rate-limiting step in the de novo synthesis of guanine nucleotides, and therefore plays an important role in the regulation of cell growth. In Schizosaccharomyces pombe (strain 972 / ATCC 24843) (Fission yeast), this protein is Inosine-5'-monophosphate dehydrogenase (gua1).